We begin with the raw amino-acid sequence, 636 residues long: MVQASSHAEGGHEGKQGAARSMGLLVAAVGVVYGDIGTSPLYTLKEVFTGGYGVQVNHDGVLGILSLILWSLLWVVSFKYVMFILRADNQGEGGTMALTALARRATAEYPKLRALMVGCGLVGASLFYGDSMITPAVSVLSAVEGMGLAFEGIDHWVVPISLVVLVALFLVQKHGTEKIGKLFGPIMVTWFVVLGALGVHGISQSPEVLKAFNPGWALNFFIVHPGMGVAILGAVVLALTGAEALYADMGHFGRKPIARAWFALVLPALVLNYFGQGAILLQNPEAARNPFYLLAPGWALLPLVGLATMATVIASQAVISGAFSLTRQAIQLGYVPRMQIQHTSSDEQGQIYIGAVNWTLMVGVVLLVIGFESSGALAAAYGVAVTGTMLMTTILVSAVMLLLWKWPPVLAVPLLVGFLLVDGLFFAANVPKIVQGGAFPVLAGIVLFVLMSTWKRGKQILVDRIDEGALPLPVFISSIRVQPPHRVEGTAVFLTARADAVPHALLHNMLHNQVLHSQVVLLTVVSEDRPRVPEHERFEVEAYGDGFFRVLLHFGFMDEPDVPAALKLCHLDDLDFSPMRTTYFLSRETVIASRLEGMSRWRGNLFAFLLKNANGNLRFFNLPLNRVIELGTQVEI.

12 helical membrane passes run 22–42, 64–84, 114–134, 150–170, 182–202, 220–240, 261–281, 293–313, 351–371, 383–403, 408–428, and 433–453; these read MGLL…SPLY, ILSL…VMFI, ALMV…SMIT, FEGI…ALFL, LFGP…VHGI, FFIV…LALT, WFAL…AILL, LLAP…ATVI, IYIG…VIGF, VAVT…MLLL, PVLA…FFAA, and IVQG…LMST.

This sequence belongs to the HAK/KUP transporter (TC 2.A.72) family.

Its subcellular location is the cell inner membrane. It catalyses the reaction K(+)(in) + H(+)(in) = K(+)(out) + H(+)(out). Functionally, transport of potassium into the cell. Likely operates as a K(+):H(+) symporter. This chain is Probable potassium transport system protein Kup, found in Pseudomonas entomophila (strain L48).